Here is a 348-residue protein sequence, read N- to C-terminus: Probable malate dehydrogenase 2, mitochondrial (348 aa).

The N-terminal 9 residues, 1 to 9 (MNKILTRSF), are a transit peptide targeting the mitochondrion. 31–37 (GASGQIG) provides a ligand contact to NAD(+). Residues arginine 112 and arginine 118 each contribute to the substrate site. NAD(+) is bound by residues asparagine 125, glutamine 132, and 150–152 (VGN). Substrate-binding residues include asparagine 152 and arginine 183. Histidine 208 serves as the catalytic Proton acceptor.

The protein belongs to the LDH/MDH superfamily. MDH type 2 family. Homodimer.

It localises to the mitochondrion. It catalyses the reaction (S)-malate + NAD(+) = oxaloacetate + NADH + H(+). In terms of biological role, catalyzes the reversible oxidation of malate to oxaloacetate. This is Probable malate dehydrogenase 2, mitochondrial (mdhB) from Dictyostelium discoideum (Social amoeba).